Reading from the N-terminus, the 1037-residue chain is Sodium/potassium exporting P-type ATPase cta3 (1037 aa).

Residues 1 to 61 (MVTINISNPV…GVSAWKVLLR (61 aa)) lie on the Cytoplasmic side of the membrane. A helical transmembrane segment spans residues 62-82 (QVLNAMCVVLILAAALSFGTT). Position 83 (D83) is a topological domain, extracellular. Residues 84 to 104 (WIEGGVISAIIVLNITVGFIQ) traverse the membrane as a helical segment. Topologically, residues 105 to 281 (EYKAEKTMDS…LNVGTPLQRK (177 aa)) are cytoplasmic. The helical transmembrane segment at 282-302 (LTVLAYILFCIAIILAIIVMA) threads the bilayer. Residues 303-313 (AHSFHVTNEVS) lie on the Extracellular side of the membrane. A helical transmembrane segment spans residues 314 to 334 (IYAISLGISIIPESLIAVLSI). At 335 to 760 (TMAMGQKNMS…GRRMFDNIMR (426 aa)) the chain is on the cytoplasmic side. Catalysis depends on D368, which acts as the 4-aspartylphosphate intermediate. D368 and T370 together coordinate Mg(2+). ATP contacts are provided by T370, E468, K520, R559, T620, G621, D622, R678, and K684. Mg(2+) is bound at residue D703. N706 lines the ATP pocket. Residues 761–781 (FVLHLLVSNVGEVILLVVGLA) traverse the membrane as a helical segment. Topologically, residues 782–787 (FRDEVH) are extracellular. The helical transmembrane segment at 788–808 (LSVFPMSPVEILWCNMITSSF) threads the bilayer. Topologically, residues 809–844 (PSMGLGMELAQPDVMERLPHDNKVGIFQKSLIVDMM) are cytoplasmic. The helical transmembrane segment at 845–865 (VYGFFLGVVSLMTWVVIMYGF) threads the bilayer. At 866 to 889 (GTGNLSYDCNAHYHAGCNDVFKAR) the chain is on the extracellular side. N869 is a glycosylation site (N-linked (GlcNAc...) asparagine). A helical transmembrane segment spans residues 890–910 (SAVFAVVTFCILIMAVEVKNF). The Cytoplasmic portion of the chain corresponds to 911 to 939 (DNSLFNLHGIPWGEWNFRYFLHTLVENKF). A helical membrane pass occupies residues 940 to 960 (LAWAIALAAVSVFPTIYIPVI). The Extracellular segment spans residues 961 to 969 (NRDVFKHTY). Residues 970–990 (IGWEWGVVAVAVMFYFFYVEI) form a helical membrane-spanning segment. The Cytoplasmic segment spans residues 991–1037 (WKSIRRSLTNPQKKGKFRRTLSNTITTESKLSEKDLEHRLFLQSRRA). Residue S1012 is modified to Phosphoserine.

The protein belongs to the cation transport ATPase (P-type) (TC 3.A.3) family. Type IID subfamily. Mg(2+) is required as a cofactor. Post-translationally, the active site is phosphorylated in presence of sodium or potassium and in conditions of higher pH. Not phosphorylated in presence of calcium ions.

It is found in the cell membrane. It carries out the reaction Na(+)(in) + ATP + H2O = Na(+)(out) + ADP + phosphate + H(+). It catalyses the reaction K(+)(in) + ATP + H2O = K(+)(out) + ADP + phosphate + H(+). Catalyzes the hydrolysis of ATP coupled with the export of sodium and potassium from the cell. May export sodium less efficiently. May transport other cations such as lithium. Sodium/potassium efflux ATPases are involved in salt tolerance and maintaining the membrane potential across the plasma membrane in high salinity (Na+) or alkaline (K+) environments. The polypeptide is Sodium/potassium exporting P-type ATPase cta3 (Schizosaccharomyces pombe (strain 972 / ATCC 24843) (Fission yeast)).